A 446-amino-acid polypeptide reads, in one-letter code: Na(+)-translocating NADH-quinone reductase subunit A (446 aa).

This sequence belongs to the NqrA family. In terms of assembly, composed of six subunits; NqrA, NqrB, NqrC, NqrD, NqrE and NqrF.

The enzyme catalyses a ubiquinone + n Na(+)(in) + NADH + H(+) = a ubiquinol + n Na(+)(out) + NAD(+). With respect to regulation, this reaction is tightly coupled to the Na(+) pumping activity and specifically requires Na(+) for activity. Inhibited by korormicin and 2-N-heptyl-4-hydroxyquinoline N-oxide (HQNO). NQR complex catalyzes the reduction of ubiquinone-1 to ubiquinol by two successive reactions, coupled with the transport of Na(+) ions from the cytoplasm to the periplasm. NqrA to NqrE are probably involved in the second step, the conversion of ubisemiquinone to ubiquinol. This Vibrio alginolyticus protein is Na(+)-translocating NADH-quinone reductase subunit A.